The following is a 448-amino-acid chain: Probable glycine dehydrogenase (decarboxylating) subunit 1 (448 aa).

The protein belongs to the GcvP family. N-terminal subunit subfamily. As to quaternary structure, the glycine cleavage system is composed of four proteins: P, T, L and H. In this organism, the P 'protein' is a heterodimer of two subunits.

The enzyme catalyses N(6)-[(R)-lipoyl]-L-lysyl-[glycine-cleavage complex H protein] + glycine + H(+) = N(6)-[(R)-S(8)-aminomethyldihydrolipoyl]-L-lysyl-[glycine-cleavage complex H protein] + CO2. In terms of biological role, the glycine cleavage system catalyzes the degradation of glycine. The P protein binds the alpha-amino group of glycine through its pyridoxal phosphate cofactor; CO(2) is released and the remaining methylamine moiety is then transferred to the lipoamide cofactor of the H protein. The chain is Probable glycine dehydrogenase (decarboxylating) subunit 1 from Staphylococcus aureus (strain COL).